A 655-amino-acid chain; its full sequence is Spastin (655 aa).

Residues 1-58 (MLFDLINSFLKNGINNSNNNNNNNNNKNNFYNSLEDDDYLLNNQTTKVSLYLYFFIFA) lie on the Cytoplasmic side of the membrane. The segment at residues 59–79 (FMFLVVDLIMLYYKHRENIES) is an intramembrane region (helical). The Cytoplasmic portion of the chain corresponds to 80–655 (RETDLSLKLN…EKWNQKFGTI (576 aa)). Over residues 102–140 (KSSPTTSTTTTTITPTTTSSSQLRQPSTPKTTTKTINSP) the composition is skewed to low complexity. Residues 102–151 (KSSPTTSTTTTTITPTTTSSSQLRQPSTPKTTTKTINSPPSTPKSPPPLP) are disordered. A compositionally biased stretch (pro residues) spans 141–151 (PSTPKSPPPLP). One can recognise an MIT domain in the interval 169–232 (LNEAKSQIDS…KRAEYLKNEL (64 aa)). Residues 261–325 (EQQQQQQQQS…TITSPGNKYG (65 aa)) form a disordered region. A compositionally biased stretch (low complexity) spans 262-320 (QQQQQQQQSSSTYRNSLNLSSSKSNSTINNRHSISSLSSLNSTTATTTTPSNTSTITSP). 424–431 (GPPGNGKT) serves as a coordination point for ATP.

It belongs to the AAA ATPase family. Spastin subfamily. In terms of assembly, homohexamer. The homohexamer is stabilized by ATP-binding. The homohexamer may adopt a ring conformation through which microtubules pass prior to being severed. Interacts with microtubules.

It localises to the membrane. The protein localises to the cytoplasm. It is found in the cytoskeleton. Its subcellular location is the microtubule organizing center. The protein resides in the centrosome. The catalysed reaction is n ATP + n H2O + a microtubule = n ADP + n phosphate + (n+1) alpha/beta tubulin heterodimers.. Its function is as follows. ATP-dependent microtubule severing protein. Microtubule severing may promote reorganization of cellular microtubule arrays and the release of microtubules from the microtubule organizing center following nucleation. The polypeptide is Spastin (Dictyostelium discoideum (Social amoeba)).